Reading from the N-terminus, the 150-residue chain is Late promoter-activating protein (150 aa).

Its function is as follows. Trans-activating factor involved in the late regulation of the P1 lytic growth cycle. May be the transcriptional activator of all late P1 functions. The sequence is that of Late promoter-activating protein (lpa) from Escherichia phage P1 (Bacteriophage P1).